The chain runs to 95 residues: Small ribosomal subunit protein bS18 (95 aa).

This sequence belongs to the bacterial ribosomal protein bS18 family. Part of the 30S ribosomal subunit. Forms a tight heterodimer with protein bS6.

Functionally, binds as a heterodimer with protein bS6 to the central domain of the 16S rRNA, where it helps stabilize the platform of the 30S subunit. In Rickettsia peacockii (strain Rustic), this protein is Small ribosomal subunit protein bS18.